Consider the following 175-residue polypeptide: Peptide methionine sulfoxide reductase MsrA (175 aa).

Cys-10 is an active-site residue.

This sequence belongs to the MsrA Met sulfoxide reductase family.

The catalysed reaction is L-methionyl-[protein] + [thioredoxin]-disulfide + H2O = L-methionyl-(S)-S-oxide-[protein] + [thioredoxin]-dithiol. It catalyses the reaction [thioredoxin]-disulfide + L-methionine + H2O = L-methionine (S)-S-oxide + [thioredoxin]-dithiol. In terms of biological role, has an important function as a repair enzyme for proteins that have been inactivated by oxidation. Catalyzes the reversible oxidation-reduction of methionine sulfoxide in proteins to methionine. In Clavibacter michiganensis subsp. michiganensis (strain NCPPB 382), this protein is Peptide methionine sulfoxide reductase MsrA.